Here is a 57-residue protein sequence, read N- to C-terminus: Large ribosomal subunit protein bL32 (57 aa).

The segment covering 1 to 19 has biased composition (basic residues); that stretch reads MATPKRRMSRANTRSRRSQ. Positions 1–20 are disordered; sequence MATPKRRMSRANTRSRRSQW.

The protein belongs to the bacterial ribosomal protein bL32 family.

The sequence is that of Large ribosomal subunit protein bL32 from Mycobacterium marinum (strain ATCC BAA-535 / M).